The following is a 158-amino-acid chain: Glycine/sarcosine/betaine reductase complex component A1 (158 aa).

Sec-44 is an active-site residue. A non-standard amino acid (selenocysteine) is located at residue Sec-44.

It belongs to the GrdA family. Monomer. Component of the glycine, sarcosine and betaine reductase complexes, together with components B and C.

It catalyses the reaction acetyl phosphate + [thioredoxin]-disulfide + NH4(+) + H2O = [thioredoxin]-dithiol + glycine + phosphate + H(+). The catalysed reaction is acetyl phosphate + methylamine + [thioredoxin]-disulfide + H2O = sarcosine + [thioredoxin]-dithiol + phosphate + H(+). The enzyme catalyses acetyl phosphate + trimethylamine + [thioredoxin]-disulfide + H2O = glycine betaine + [thioredoxin]-dithiol + phosphate + H(+). Its function is as follows. In the first step of glycine, betaine and sarcosine reductases, the substrate is bound to component PB via a Schiff base intermediate. Then the PB-activated substrate is nucleophilically attacked by the selenol anion of component PA to transform it to a carboxymethylated selenoether and the respective amine. By action of component PC, acetyl phosphate is formed, leaving component PA in its oxidized state. Finally component PA becomes reduced by the thioredoxin system to start a new catalytic cycle of reductive deamination. The sequence is that of Glycine/sarcosine/betaine reductase complex component A1 (grdA1) from Peptoclostridium acidaminophilum (Eubacterium acidaminophilum).